The primary structure comprises 306 residues: tRNA N6-adenosine threonylcarbamoyltransferase (306 aa).

Residues histidine 110 and histidine 114 each contribute to the Fe cation site. Residues 132-136 (IASGK), aspartate 165, glycine 178, aspartate 182, and asparagine 268 contribute to the substrate site. A Fe cation-binding site is contributed by aspartate 292.

This sequence belongs to the KAE1 / TsaD family. It depends on Fe(2+) as a cofactor.

It is found in the cytoplasm. It carries out the reaction L-threonylcarbamoyladenylate + adenosine(37) in tRNA = N(6)-L-threonylcarbamoyladenosine(37) in tRNA + AMP + H(+). In terms of biological role, required for the formation of a threonylcarbamoyl group on adenosine at position 37 (t(6)A37) in tRNAs that read codons beginning with adenine. Is involved in the transfer of the threonylcarbamoyl moiety of threonylcarbamoyl-AMP (TC-AMP) to the N6 group of A37, together with TsaE and TsaB. TsaD likely plays a direct catalytic role in this reaction. The polypeptide is tRNA N6-adenosine threonylcarbamoyltransferase (Malacoplasma penetrans (strain HF-2) (Mycoplasma penetrans)).